The sequence spans 580 residues: Frizzled-10-B (580 aa).

The N-terminal stretch at 1 to 20 (MEPRVVTALLLSLAAALCSG) is a signal peptide. Residues 21–224 (ISSINPDRSG…DVYWSKNDKK (204 aa)) lie on the Extracellular side of the membrane. An FZ domain is found at 29–150 (SGEGRCQAIE…NDPNYLCMEA (122 aa)). 5 disulfides stabilise this stretch: Cys34/Cys95, Cys42/Cys88, Cys79/Cys117, Cys106/Cys147, and Cys110/Cys134. Asn48 is a glycosylation site (N-linked (GlcNAc...) asparagine). Asn153 is a glycosylation site (N-linked (GlcNAc...) asparagine). The disordered stretch occupies residues 173-194 (RPNSGHEMYPKDPKGRSSCENS). Over residues 180–189 (MYPKDPKGRS) the composition is skewed to basic and acidic residues. Residues 225-245 (FAFIWIAIWSLLCFFSSAFTV) form a helical membrane-spanning segment. The Cytoplasmic portion of the chain corresponds to 246-261 (LTFLVDPLRFKYPERP). The chain crosses the membrane as a helical span at residues 262–282 (IIFLSMCYCVYSVGYIIRLFA). The Extracellular portion of the chain corresponds to 283 to 309 (GADSIACDRDSGQLYVIQEGLESTGCT). Residues 310–330 (IVFLILYYFGMASSLWWVILT) form a helical membrane-spanning segment. Topologically, residues 331 to 350 (LTWFLAAGKKWGHEAIEANS) are cytoplasmic. A helical transmembrane segment spans residues 351–371 (SYFHLAAWAIPAVKTIMILVM). At 372 to 392 (RRVAGDELTGVCYVGSMDVNA) the chain is on the extracellular side. The chain crosses the membrane as a helical span at residues 393–413 (LTGFVLIPLACYLIIGTSFIL). Topologically, residues 414 to 442 (SGFVALFHIRRVMKTGGENTDKLEKLMVR) are cytoplasmic. A helical membrane pass occupies residues 443-463 (IGVFSVLYTVPATCVIACYFY). At 464 to 501 (ERLNMDFWKILATQDKCKMDSQTKTLDCTMTSSIPAVE) the chain is on the extracellular side. A helical transmembrane segment spans residues 502 to 522 (IFMVKIFMLLVVGITSGMWIW). The Cytoplasmic portion of the chain corresponds to 523–580 (TSKTVQSWQNVFSKSLKKRNRNKPASVITSAGIYKKPQQPPKIHHGKYESALRSPTCV). The Lys-Thr-X-X-X-Trp motif, mediates interaction with the PDZ domain of Dvl family members motif lies at 525–530 (KTVQSW). A disordered region spans residues 558-580 (KPQQPPKIHHGKYESALRSPTCV). Residues 578-580 (TCV) carry the PDZ-binding motif.

It belongs to the G-protein coupled receptor Fz/Smo family. Expressed in liver, lung, brain, testis, heart and ovary.

It localises to the cell membrane. In terms of biological role, receptor for Wnt proteins. Most of frizzled receptors are coupled to the beta-catenin canonical signaling pathway, which leads to the activation of disheveled proteins, inhibition of GSK-3 kinase, nuclear accumulation of beta-catenin and activation of Wnt target genes. A second signaling pathway involving PKC and calcium fluxes has been seen for some family members, but it is not yet clear if it represents a distinct pathway or if it can be integrated in the canonical pathway, as PKC seems to be required for Wnt-mediated inactivation of GSK-3 kinase. Both pathways seem to involve interactions with G-proteins. May be involved in transduction and intercellular transmission of polarity information during tissue morphogenesis and/or in differentiated tissues. Activated by Wnt8. Could have an antagonizing activity in the morphogenesis during development. The protein is Frizzled-10-B (fzd10-b) of Xenopus laevis (African clawed frog).